The chain runs to 154 residues: MLFIFYIPYYPGLGDFSFIINSYATNAIFLAAYALITKSKVDKIKFPIVTMLLVPLDFAAMLAGGLVSWGIVSMPYWLWGDWRLMDELARYRGELGALDAIVGGIILGYSASFAFTKVNRKHLVISWMLANSISTLVVAIFFVPHFCGMPPYRC.

The next 4 helical transmembrane spans lie at 15–37, 58–80, 95–116, and 123–145; these read DFSF…ALIT, FAAM…WLWG, LGAL…FAFT, and LVIS…FVPH.

Its subcellular location is the cell membrane. This is an uncharacterized protein from Archaeoglobus fulgidus (strain ATCC 49558 / DSM 4304 / JCM 9628 / NBRC 100126 / VC-16).